The chain runs to 90 residues: UPF0223 protein LMHCC_1569 (90 aa).

This sequence belongs to the UPF0223 family.

This chain is UPF0223 protein LMHCC_1569, found in Listeria monocytogenes serotype 4a (strain HCC23).